The sequence spans 461 residues: ATP synthase subunit beta (461 aa).

Residue 151–158 (GGAGVGKT) coordinates ATP.

It belongs to the ATPase alpha/beta chains family. In terms of assembly, F-type ATPases have 2 components, CF(1) - the catalytic core - and CF(0) - the membrane proton channel. CF(1) has five subunits: alpha(3), beta(3), gamma(1), delta(1), epsilon(1). CF(0) has three main subunits: a(1), b(2) and c(9-12). The alpha and beta chains form an alternating ring which encloses part of the gamma chain. CF(1) is attached to CF(0) by a central stalk formed by the gamma and epsilon chains, while a peripheral stalk is formed by the delta and b chains.

Its subcellular location is the cell inner membrane. The catalysed reaction is ATP + H2O + 4 H(+)(in) = ADP + phosphate + 5 H(+)(out). In terms of biological role, produces ATP from ADP in the presence of a proton gradient across the membrane. The catalytic sites are hosted primarily by the beta subunits. This chain is ATP synthase subunit beta, found in Colwellia psychrerythraea (strain 34H / ATCC BAA-681) (Vibrio psychroerythus).